The sequence spans 327 residues: Methionyl-tRNA formyltransferase (327 aa).

Residue 122–125 (SLLP) participates in (6S)-5,6,7,8-tetrahydrofolate binding.

Belongs to the Fmt family.

The catalysed reaction is L-methionyl-tRNA(fMet) + (6R)-10-formyltetrahydrofolate = N-formyl-L-methionyl-tRNA(fMet) + (6S)-5,6,7,8-tetrahydrofolate + H(+). Its function is as follows. Attaches a formyl group to the free amino group of methionyl-tRNA(fMet). The formyl group appears to play a dual role in the initiator identity of N-formylmethionyl-tRNA by promoting its recognition by IF2 and preventing the misappropriation of this tRNA by the elongation apparatus. This is Methionyl-tRNA formyltransferase from Ralstonia nicotianae (strain ATCC BAA-1114 / GMI1000) (Ralstonia solanacearum).